We begin with the raw amino-acid sequence, 166 residues long: Endoribonuclease YbeY (166 aa).

Zn(2+)-binding residues include H129, H133, and H139.

The protein belongs to the endoribonuclease YbeY family. Zn(2+) serves as cofactor.

The protein localises to the cytoplasm. In terms of biological role, single strand-specific metallo-endoribonuclease involved in late-stage 70S ribosome quality control and in maturation of the 3' terminus of the 16S rRNA. The polypeptide is Endoribonuclease YbeY (Mesorhizobium japonicum (strain LMG 29417 / CECT 9101 / MAFF 303099) (Mesorhizobium loti (strain MAFF 303099))).